Reading from the N-terminus, the 298-residue chain is ADP-ribosylation factor GTPase-activating protein effector protein 2 (298 aa).

S2 carries the post-translational modification N-acetylserine. In terms of domain architecture, Arf-GAP spans 8–130 (KKALSALLRD…KWIGDLSSIE (123 aa)). Residues 23-47 (CADCKAQLHPRWASWSLGVFICIKC) form a C4-type zinc finger. Residues 137–180 (EPVLHKPSANHSLPASNARLDQSSNSLQKTQTQPPSHLLSTSRS) are disordered. The span at 145–171 (ANHSLPASNARLDQSSNSLQKTQTQPP) shows a compositional bias: polar residues. A phosphoserine mark is found at S180, S183, and S207.

It is found in the cytoplasm. Its subcellular location is the golgi apparatus. GTPase-activating protein for the ADP ribosylation factor family. This Saccharomyces cerevisiae (strain ATCC 204508 / S288c) (Baker's yeast) protein is ADP-ribosylation factor GTPase-activating protein effector protein 2 (AGE2).